The sequence spans 142 residues: Putative pre-16S rRNA nuclease (142 aa).

This sequence belongs to the YqgF nuclease family.

It is found in the cytoplasm. In terms of biological role, could be a nuclease involved in processing of the 5'-end of pre-16S rRNA. The protein is Putative pre-16S rRNA nuclease of Ruminiclostridium cellulolyticum (strain ATCC 35319 / DSM 5812 / JCM 6584 / H10) (Clostridium cellulolyticum).